A 319-amino-acid polypeptide reads, in one-letter code: Ribosomal large subunit pseudouridine synthase C (319 aa).

The S4 RNA-binding domain maps to 20–83 (QRIDNFLRTQ…AEREEEAVSP (64 aa)). Aspartate 144 is a catalytic residue.

This sequence belongs to the pseudouridine synthase RluA family.

It carries out the reaction uridine(955/2504/2580) in 23S rRNA = pseudouridine(955/2504/2580) in 23S rRNA. In terms of biological role, responsible for synthesis of pseudouridine from uracil at positions 955, 2504 and 2580 in 23S ribosomal RNA. This is Ribosomal large subunit pseudouridine synthase C (rluC) from Escherichia coli O157:H7.